Here is a 459-residue protein sequence, read N- to C-terminus: Glycosyl hydrolase family 109 protein (459 aa).

Residues 1 to 31 (MHNIHRRHFLKAAGAVTAGLITANITASTHA) constitute a signal peptide (tat-type signal). Residues 64–65 (ER), aspartate 86, 135–138 (WEWH), 155–156 (EV), and asparagine 184 contribute to the NAD(+) site. Substrate contacts are provided by residues tyrosine 213, arginine 232, 244-247 (YPTH), and tyrosine 326. Residue tyrosine 244 coordinates NAD(+).

The protein belongs to the Gfo/Idh/MocA family. Glycosyl hydrolase 109 subfamily. NAD(+) serves as cofactor. In terms of processing, predicted to be exported by the Tat system. The position of the signal peptide cleavage has not been experimentally proven.

Glycosidase. The protein is Glycosyl hydrolase family 109 protein of Shewanella sp. (strain W3-18-1).